The primary structure comprises 279 residues: Putative pyruvate, phosphate dikinase regulatory protein (279 aa).

Residue 153 to 160 (GVSRTSKT) participates in ADP binding.

The protein belongs to the pyruvate, phosphate/water dikinase regulatory protein family. PDRP subfamily.

The enzyme catalyses N(tele)-phospho-L-histidyl/L-threonyl-[pyruvate, phosphate dikinase] + ADP = N(tele)-phospho-L-histidyl/O-phospho-L-threonyl-[pyruvate, phosphate dikinase] + AMP + H(+). The catalysed reaction is N(tele)-phospho-L-histidyl/O-phospho-L-threonyl-[pyruvate, phosphate dikinase] + phosphate + H(+) = N(tele)-phospho-L-histidyl/L-threonyl-[pyruvate, phosphate dikinase] + diphosphate. Bifunctional serine/threonine kinase and phosphorylase involved in the regulation of the pyruvate, phosphate dikinase (PPDK) by catalyzing its phosphorylation/dephosphorylation. In Rhodopseudomonas palustris (strain BisA53), this protein is Putative pyruvate, phosphate dikinase regulatory protein.